We begin with the raw amino-acid sequence, 380 residues long: Cytochrome b (380 aa).

The next 4 membrane-spanning stretches (helical) occupy residues 34–54, 78–99, 114–134, and 179–199; these read FGSL…LLAM, WLIR…YLHI, WNTG…GYVL, and FFAL…IHLT. Positions 84 and 98 each coordinate heme b. Residues His183 and His197 each coordinate heme b. His202 is a binding site for a ubiquinone. 4 helical membrane-spanning segments follow: residues 227-247, 289-309, 321-341, and 348-368; these read LKDI…ALFS, LGGV…PFLH, ISQL…WVGS, and FIII…ILFP.

This sequence belongs to the cytochrome b family. The cytochrome bc1 complex contains 11 subunits: 3 respiratory subunits (MT-CYB, CYC1 and UQCRFS1), 2 core proteins (UQCRC1 and UQCRC2) and 6 low-molecular weight proteins (UQCRH/QCR6, UQCRB/QCR7, UQCRQ/QCR8, UQCR10/QCR9, UQCR11/QCR10 and a cleavage product of UQCRFS1). This cytochrome bc1 complex then forms a dimer. It depends on heme b as a cofactor.

It is found in the mitochondrion inner membrane. In terms of biological role, component of the ubiquinol-cytochrome c reductase complex (complex III or cytochrome b-c1 complex) that is part of the mitochondrial respiratory chain. The b-c1 complex mediates electron transfer from ubiquinol to cytochrome c. Contributes to the generation of a proton gradient across the mitochondrial membrane that is then used for ATP synthesis. The protein is Cytochrome b (MT-CYB) of Puffinus opisthomelas (Black-vented shearwater).